The following is a 40-amino-acid chain: Photosystem II reaction center protein J (40 aa).

Residues 8–28 (IPLWLVGTVAGILVIGLIGIF) traverse the membrane as a helical segment.

Belongs to the PsbJ family. As to quaternary structure, PSII is composed of 1 copy each of membrane proteins PsbA, PsbB, PsbC, PsbD, PsbE, PsbF, PsbH, PsbI, PsbJ, PsbK, PsbL, PsbM, PsbT, PsbX, PsbY, PsbZ, Psb30/Ycf12, at least 3 peripheral proteins of the oxygen-evolving complex and a large number of cofactors. It forms dimeric complexes.

It localises to the plastid. The protein localises to the chloroplast thylakoid membrane. One of the components of the core complex of photosystem II (PSII). PSII is a light-driven water:plastoquinone oxidoreductase that uses light energy to abstract electrons from H(2)O, generating O(2) and a proton gradient subsequently used for ATP formation. It consists of a core antenna complex that captures photons, and an electron transfer chain that converts photonic excitation into a charge separation. The chain is Photosystem II reaction center protein J from Gnetum parvifolium (Small-leaved jointfir).